We begin with the raw amino-acid sequence, 414 residues long: uncharacterized protein (414 aa).

The N-terminal stretch at 1 to 18 (MLKRLMLASAILPVVSFA) is a signal peptide.

This is an uncharacterized protein from Aquifex aeolicus (strain VF5).